The chain runs to 161 residues: V-type proton ATPase 16 kDa proteolipid subunit c (161 aa).

Residues 1 to 15 are Lumenal-facing; it reads MSYDLATAERAAYAP. A helical transmembrane segment spans residues 16 to 36; it reads FFGYMGAASAQIFTVLGAAYG. Topologically, residues 37-58 are cytoplasmic; sequence TAKSAVGISSMGVMRPELIMKS. A helical membrane pass occupies residues 59-79; that stretch reads VIPVIMAGIIGIYGLVVAMVL. Residues 80–98 lie on the Lumenal side of the membrane; sequence RGKVTSASAGYTLDKGFAH. Residues 99–119 form a helical membrane-spanning segment; it reads LAAGLTCGLCGLGAGYAIGIV. Residues 120 to 137 are Cytoplasmic-facing; it reads GDAGVRGTAQQPRLFVGM. Residues 138-158 form a helical membrane-spanning segment; sequence ILILIFSEVLGLYGMIVALIL. The Lumenal segment spans residues 159–161; it reads GTS.

Belongs to the V-ATPase proteolipid subunit family. In terms of assembly, V-ATPase is a heteromultimeric enzyme made up of two complexes: the ATP-hydrolytic V1 complex and the proton translocation V0 complex. The V1 complex consists of three catalytic AB heterodimers that form a heterohexamer, three peripheral stalks each consisting of EG heterodimers, one central rotor including subunits D and F, and the regulatory subunits C and H. The proton translocation complex V0 consists of the proton transport subunit a, a ring of proteolipid subunits c9c'', rotary subunit d, subunits e and f, and the accessory subunits vah-19/Ac45 and vah-20/PRR.

Its subcellular location is the membrane. Its function is as follows. Proton-conducting pore forming subunit of the V0 complex of vacuolar(H+)-ATPase (V-ATPase), a multisubunit enzyme composed of a peripheral complex (V1) that hydrolyzes ATP and a membrane integral complex (V0) that translocates protons. V-ATPase is responsible for acidifying and maintaining the pH of intracellular compartments and in some cell types, is targeted to the plasma membrane, where it is responsible for acidifying the extracellular environment. This Ascaris suum (Pig roundworm) protein is V-type proton ATPase 16 kDa proteolipid subunit c (12).